A 501-amino-acid polypeptide reads, in one-letter code: Ribonuclease Y (501 aa).

A helical transmembrane segment spans residues 7 to 27 (LVVIALLGALTLLTAGHVLAL). One can recognise a KH domain in the interval 190–256 (VVRAVPLPEE…RLTLEKLVAD (67 aa)). The region spanning 316-409 (VLAHLVESAH…TQAADAISGG (94 aa)) is the HD domain.

This sequence belongs to the RNase Y family.

It is found in the cell membrane. In terms of biological role, endoribonuclease that initiates mRNA decay. The sequence is that of Ribonuclease Y from Thermobifida fusca (strain YX).